A 262-amino-acid polypeptide reads, in one-letter code: MTSPADATTEVAVSQESVAMVTGAGRGIGAATAERLAAEGMAVIVVDRTEQDTRATVAAIRTAGGRARGIGCDVAVAQAVTAAVATAVEEFGRIDVLVNCAGINRDRLLLTMGDQEWDTVLDVNLGGTMRCSFAVGRHMRRQGHGRIINFSSVAARGNAGQTNYATAKGAIAGFTRTLAAELGPHGVTVNAIAPGFVATPMVDELAERLGGDRDSVMSEAAKSSAVGRIGTPEEIAATVVFVARPESGYLTGETVHVDGGRP.

Residues 23-26 and 73-74 contribute to the NADP(+) site; these read GAGR and DV. Substrate is bound at residue Ser-152. The active-site Proton acceptor is the Tyr-164. 164 to 168 is an NADP(+) binding site; that stretch reads YATAK.

Belongs to the short-chain dehydrogenases/reductases (SDR) family. As to quaternary structure, heterotetramer; the NovJ(2)K(2) heterotetramer is composed of subunits of 2 NovJ and 2 subunits of NovK.

The protein operates within antibiotic biosynthesis; novobiocin biosynthesis. Catalytic subunit of the NovJ(2)K(2) heterotetramer that catalyzes the NADPH-dependent reduction of the tyrosyl moiety of L-beta-OH-Tyr-S-NovH intermediate to yield the tethered beta-ketotyrosyl-S-NovH in the novobiocin biosynthesis pathway. Novobiocin is an aminocoumarin family antibiotic that targets bacterial DNA gyrases. The protein is Short-chain reductase protein NovJ (novJ) of Streptomyces niveus (Streptomyces spheroides).